Here is a 400-residue protein sequence, read N- to C-terminus: Subtilisin-like protease 11 (400 aa).

The signal sequence occupies residues 1-19 (MGLFKVIFTAVAALSAVDA). Positions 20 to 117 (AELLSSAKSK…VEHDRHVYIS (98 aa)) are excised as a propeptide. One can recognise an Inhibitor I9 domain in the interval 35–116 (SYLVVMKDSV…FVEHDRHVYI (82 aa)). The region spanning 127 to 400 (SWGLGRVSHR…NKLLYNGSGK (274 aa)) is the Peptidase S8 domain. Residue asparagine 138 is glycosylated (N-linked (GlcNAc...) asparagine). Aspartate 159 (charge relay system) is an active-site residue. Asparagine 181 is a glycosylation site (N-linked (GlcNAc...) asparagine). Histidine 191 (charge relay system) is an active-site residue. 2 N-linked (GlcNAc...) asparagine glycosylation sites follow: asparagine 252 and asparagine 337. Serine 346 serves as the catalytic Charge relay system. N-linked (GlcNAc...) asparagine glycans are attached at residues asparagine 388 and asparagine 396.

This sequence belongs to the peptidase S8 family.

It is found in the secreted. Its function is as follows. Secreted subtilisin-like serine protease with keratinolytic activity that contributes to pathogenicity. This chain is Subtilisin-like protease 11 (SUB11), found in Arthroderma benhamiae (strain ATCC MYA-4681 / CBS 112371) (Trichophyton mentagrophytes).